Reading from the N-terminus, the 1351-residue chain is D-lysergyl-peptide-synthetase subunit 2 (1351 aa).

An adenylation (A) domain region spans residues 285–684; sequence RCLSQPTASA…GRKDTQVKLR (400 aa). Residues 828–904 enclose the Carrier domain; the sequence is APQTTTEKLL…ALACVVRSGK (77 aa). S865 carries the O-(pantetheine 4'-phosphoryl)serine modification. The interval 941-1340 is condensation (C) domain; the sequence is EDVYPCTPLQ…LIRDILAVPQ (400 aa).

Belongs to the NRP synthetase family.

It participates in alkaloid biosynthesis; ergot alkaloid biosynthesis. Its function is as follows. D-lysergyl-peptide-synthetase subunit 2; part of the gene cluster that mediates the biosynthesis of fungal ergot alkaloid ergovaline, the predominant ergopeptine product in E.festucae var. lolii. DmaW catalyzes the first step of ergot alkaloid biosynthesis by condensing dimethylallyl diphosphate (DMAP) and tryptophan to form 4-dimethylallyl-L-tryptophan. The second step is catalyzed by the methyltransferase easF that methylates 4-dimethylallyl-L-tryptophan in the presence of S-adenosyl-L-methionine, resulting in the formation of 4-dimethylallyl-L-abrine. The catalase easC and the FAD-dependent oxidoreductase easE then transform 4-dimethylallyl-L-abrine to chanoclavine-I which is further oxidized by easD in the presence of NAD(+), resulting in the formation of chanoclavine-I aldehyde. Agroclavine dehydrogenase easG then mediates the conversion of chanoclavine-I aldehyde to agroclavine via a non-enzymatic adduct reaction: the substrate is an iminium intermediate that is formed spontaneously from chanoclavine-I aldehyde in the presence of glutathione. The presence of easA is not required to complete this reaction. Further conversion of agroclavine to paspalic acid is a two-step process involving oxidation of agroclavine to elymoclavine and of elymoclavine to paspalic acid, the second step being performed by the elymoclavine oxidase cloA. Paspalic acid is then further converted to D-lysergic acid. Ergovaline is assembled from D-lysergic acid and three different amino acids by the D-lysergyl-peptide-synthetase composed of a monomudular (lpsB) and a trimodular (lpsA) nonribosomal peptide synthetase subunit. This is D-lysergyl-peptide-synthetase subunit 2 from Epichloe festucae var. lolii (Neotyphodium lolii).